Consider the following 353-residue polypeptide: UPF0283 membrane protein CKO_01392 (353 aa).

The next 3 membrane-spanning stretches (helical) occupy residues 70–90 (MVMG…VQWT), 99–119 (WVAL…VGSV), and 213–233 (ESTL…FIAW).

Belongs to the UPF0283 family.

The protein resides in the cell inner membrane. The sequence is that of UPF0283 membrane protein CKO_01392 from Citrobacter koseri (strain ATCC BAA-895 / CDC 4225-83 / SGSC4696).